The chain runs to 145 residues: 3-hydroxyacyl-[acyl-carrier-protein] dehydratase FabZ (145 aa).

His-47 is a catalytic residue.

It belongs to the thioester dehydratase family. FabZ subfamily.

The protein localises to the cytoplasm. It carries out the reaction a (3R)-hydroxyacyl-[ACP] = a (2E)-enoyl-[ACP] + H2O. In terms of biological role, involved in unsaturated fatty acids biosynthesis. Catalyzes the dehydration of short chain beta-hydroxyacyl-ACPs and long chain saturated and unsaturated beta-hydroxyacyl-ACPs. The sequence is that of 3-hydroxyacyl-[acyl-carrier-protein] dehydratase FabZ from Vesicomyosocius okutanii subsp. Calyptogena okutanii (strain HA).